Reading from the N-terminus, the 197-residue chain is Pyridoxal 5'-phosphate synthase subunit PdxT (197 aa).

52-54 (GES) contacts L-glutamine. Cysteine 84 acts as the Nucleophile in catalysis. Residues arginine 111 and 139–140 (IR) contribute to the L-glutamine site. Catalysis depends on charge relay system residues histidine 175 and glutamate 177.

This sequence belongs to the glutaminase PdxT/SNO family. In the presence of PdxS, forms a dodecamer of heterodimers. Only shows activity in the heterodimer.

The catalysed reaction is aldehydo-D-ribose 5-phosphate + D-glyceraldehyde 3-phosphate + L-glutamine = pyridoxal 5'-phosphate + L-glutamate + phosphate + 3 H2O + H(+). It catalyses the reaction L-glutamine + H2O = L-glutamate + NH4(+). Its pathway is cofactor biosynthesis; pyridoxal 5'-phosphate biosynthesis. Functionally, catalyzes the hydrolysis of glutamine to glutamate and ammonia as part of the biosynthesis of pyridoxal 5'-phosphate. The resulting ammonia molecule is channeled to the active site of PdxS. The chain is Pyridoxal 5'-phosphate synthase subunit PdxT from Halorubrum lacusprofundi (strain ATCC 49239 / DSM 5036 / JCM 8891 / ACAM 34).